The following is a 435-amino-acid chain: Temperature-sensitive sn-2 acyl-lipid omega-3 desaturase (ferredoxin), chloroplastic (435 aa).

Residues 1–42 constitute a chloroplast transit peptide; it reads MASSVLSECGFRPLPRFYPKHTTSFASNPKPTFKFNPPLKPP. Transmembrane regions (helical) follow at residues 111–131 and 134–154; these read MSYV…AAYF and WLLW…LFVL. The short motif at 156-160 is the Histidine box-1 element; it reads HDCGH. Residues 192–196 carry the Histidine box-2 motif; that stretch reads HRTHH. Transmembrane regions (helical) follow at residues 268–290 and 297–319; these read VLTS…FVMG and LYGI…HHHG. The Histidine box-3 motif lies at 359 to 363; the sequence is HVIHH.

Belongs to the fatty acid desaturase type 1 family.

The protein resides in the plastid. It is found in the chloroplast membrane. The enzyme catalyses a (7Z,10Z)-hexadecadienoyl-containing glycerolipid + 2 reduced [2Fe-2S]-[ferredoxin] + O2 + 2 H(+) = a (7Z,10Z,13Z)-hexadecatrienoyl-containing glycerolipid + 2 oxidized [2Fe-2S]-[ferredoxin] + 2 H2O. The catalysed reaction is a (9Z,12Z)-octadecadienoyl-containing glycerolipid + 2 reduced [2Fe-2S]-[ferredoxin] + O2 + 2 H(+) = (9Z,12Z,15Z)-octadecatrienoyl-containing glycerolipid + 2 oxidized [2Fe-2S]-[ferredoxin] + 2 H2O. It functions in the pathway lipid metabolism; polyunsaturated fatty acid biosynthesis. Chloroplast omega-3 fatty acid desaturase introduces the third double bond in the biosynthesis of 16:3 and 18:3 fatty acids, important constituents of plant membranes. It is thought to use ferredoxin as an electron donor and to act on fatty acids esterified to galactolipids, sulfolipids and phosphatidylglycerol. This chain is Temperature-sensitive sn-2 acyl-lipid omega-3 desaturase (ferredoxin), chloroplastic, found in Arabidopsis thaliana (Mouse-ear cress).